We begin with the raw amino-acid sequence, 491 residues long: Aspartyl/glutamyl-tRNA(Asn/Gln) amidotransferase subunit B (491 aa).

Belongs to the GatB/GatE family. GatB subfamily. Heterotrimer of A, B and C subunits.

The catalysed reaction is L-glutamyl-tRNA(Gln) + L-glutamine + ATP + H2O = L-glutaminyl-tRNA(Gln) + L-glutamate + ADP + phosphate + H(+). The enzyme catalyses L-aspartyl-tRNA(Asn) + L-glutamine + ATP + H2O = L-asparaginyl-tRNA(Asn) + L-glutamate + ADP + phosphate + 2 H(+). Functionally, allows the formation of correctly charged Asn-tRNA(Asn) or Gln-tRNA(Gln) through the transamidation of misacylated Asp-tRNA(Asn) or Glu-tRNA(Gln) in organisms which lack either or both of asparaginyl-tRNA or glutaminyl-tRNA synthetases. The reaction takes place in the presence of glutamine and ATP through an activated phospho-Asp-tRNA(Asn) or phospho-Glu-tRNA(Gln). This Paraburkholderia xenovorans (strain LB400) protein is Aspartyl/glutamyl-tRNA(Asn/Gln) amidotransferase subunit B.